Reading from the N-terminus, the 290-residue chain is MSSLMLRLLPLLYIISAHFVLHPETSPSLIYEIGSIVTFHCRLETTTNIRSVSWYNKNRLISNHEVQNMDNLSFTDDGYVLIHELNKINNLAVDSKLYFHIKHNRTTSLLKIKAKSAYDATCLTCTFTVDNEKTSATSCLKLFMKPIVVLYFRYLDNFLDVTCTVTSYPKPNVVIKFLGEVYKRDIPIVRQNENGSSTVSVNFTFKRRTKLEFVGKTVSCLASSWFTNQKASALVTSGEHTVQNHDEYSKEGVKSSNSDETVFTWTVPLILILISVIVLLISVCIVAFKS.

Positions 1 to 17 (MSSLMLRLLPLLYIISA) are cleaved as a signal peptide. Over 18–267 (HFVLHPETSP…SDETVFTWTV (250 aa)) the chain is Extracellular. Residues 23 to 135 (PETSPSLIYE…TFTVDNEKTS (113 aa)) form the Ig-like V-type domain. Cysteines 41 and 125 form a disulfide. Residues asparagine 71, asparagine 104, asparagine 194, and asparagine 202 are each glycosylated (N-linked (GlcNAc...) asparagine; by host). The region spanning 146-236 (PIVVLYFRYL…TNQKASALVT (91 aa)) is the Ig-like C2-type domain. Residues 268–288 (PLILILISVIVLLISVCIVAF) form a helical membrane-spanning segment. At 289–290 (KS) the chain is on the cytoplasmic side.

It localises to the membrane. This Homo sapiens (Human) protein is Putative OX-2 membrane glycoprotein homolog (U85).